A 109-amino-acid chain; its full sequence is Hainantoxin-XVIII-5 (109 aa).

An N-terminal signal peptide occupies residues 1-18 (MKLSIIIIATSLVIAVVA). Residues 19–46 (FPSKDSKAIENDKTEQRMEIVVQETARA) constitute a propeptide that is removed on maturation. 4 disulfides stabilise this stretch: Cys47–Cys62, Cys55–Cys68, Cys59–Cys108, and Cys61–Cys81.

It belongs to the neurotoxin 25 family. F7 subfamily. Expressed by the venom gland.

The protein localises to the secreted. In terms of biological role, putative ion channel inhibitor. In Cyriopagopus hainanus (Chinese bird spider), this protein is Hainantoxin-XVIII-5.